A 767-amino-acid polypeptide reads, in one-letter code: General transcription and DNA repair factor IIH helicase/translocase subunit XPB1 (767 aa).

The segment at Met1–Asp51 is disordered. Acidic residues predominate over residues Asp31–Arg41. Residues Asp42–Asp51 show a composition bias toward basic and acidic residues. The region spanning Met293–Leu455 is the Helicase ATP-binding domain. Leu306–Ser313 is a binding site for ATP. The short motif at Asp408–His411 is the DEVH box element. The 167-residue stretch at Arg510–Ser676 folds into the Helicase C-terminal domain. The interval Arg742–Val767 is disordered. The Nuclear localization signal motif lies at Lys750 to Tyr766. Residues Arg758–Val767 are compositionally biased toward basic residues.

The protein belongs to the helicase family. RAD25/XPB subfamily. Component of the 7-subunit TFIIH core complex composed of XPB, XPD, TFB1/GTF2H1, GTF2H2/P44, TFB4/GTF2H3, TFB2/GTF2H4 and TFB5/GTF2H5, which is active in NER. The core complex associates with the 3-subunit CDK-activating kinase (CAK) module composed of CYCH1/cyclin H1, CDKD and MAT1/At4g30820 to form the 10-subunit holoenzyme (holo-TFIIH) active in transcription. As to expression, expressed ubiquitously.

The protein localises to the nucleus. It carries out the reaction Couples ATP hydrolysis with the unwinding of duplex DNA by translocating in the 3'-5' direction.. The catalysed reaction is ATP + H2O = ADP + phosphate + H(+). In terms of biological role, ATP-dependent 3'-5' DNA helicase/translocase; binds dsDNA rather than ssDNA, unzipping it in a translocase rather than classical helicase activity. Component of the general transcription and DNA repair factor IIH (TFIIH) core complex. When complexed to CDK-activating kinase (CAK), involved in RNA transcription by RNA polymerase II. The ATPase activity of XPB/ERCC3, but not its helicase activity, is required for DNA opening; it may wrap around the damaged DNA wedging it open, causing localized melting and twisting that allows XPD/ERCC2 helicase to anchor. The ATP-dependent helicase activity of XPB/ERCC3 may be required for promoter escape. Also involved in transcription-coupled nucleotide excision repair (NER) of damaged DNA. In NER, TFIIH acts by opening DNA around the lesion to allow the excision of the damaged oligonucleotide and its replacement by a new DNA fragment. The structure of the TFIIH transcription complex differs from the NER-TFIIH complex. Partially complements UV sensitivity of a yeast SSL2 mutation. Required during the early stages of development, including seed germination. The chain is General transcription and DNA repair factor IIH helicase/translocase subunit XPB1 (XPB1) from Arabidopsis thaliana (Mouse-ear cress).